The following is a 1670-amino-acid chain: Protein TASOR (1670 aa).

The disordered stretch occupies residues 1–110; it reads MATAVETEAC…QIPRKSREKK (110 aa). Ala2 carries the post-translational modification N-acetylalanine. Residues 67 to 78 are compositionally biased toward polar residues; that stretch reads QSLSHEQPQDSS. A Phosphoserine modification is found at Ser344. Residue Lys586 forms a Glycyl lysine isopeptide (Lys-Gly) (interchain with G-Cter in SUMO2) linkage. Residues Ser633, Ser636, Ser673, and Ser800 each carry the phosphoserine modification. Residues Lys823 and Lys832 each participate in a glycyl lysine isopeptide (Lys-Gly) (interchain with G-Cter in SUMO2) cross-link. At Ser843 the chain carries Phosphoserine. Lys872 is covalently cross-linked (Glycyl lysine isopeptide (Lys-Gly) (interchain with G-Cter in SUMO2)). The disordered stretch occupies residues 921–947; the sequence is TGGNARSPEDQLGKHGEKQTPGMKSPE. Ser927, Ser971, and Ser979 each carry phosphoserine. Over residues 927–938 the composition is skewed to basic and acidic residues; it reads SPEDQLGKHGEK. Phosphothreonine is present on residues Thr982 and Thr1049. Phosphoserine is present on Ser1103. The span at 1532–1545 shows a compositional bias: basic and acidic residues; the sequence is ETKGSRGTDQKKNT. 2 disordered regions span residues 1532–1558 and 1638–1670; these read ETKG…VQNS and FLSA…SQEK. 2 stretches are compositionally biased toward polar residues: residues 1546–1558 and 1659–1670; these read QIEL…VQNS and KSDSSRPYSQEK. Ser1552 carries the post-translational modification Phosphoserine.

This sequence belongs to the TASOR family. As to quaternary structure, component of the HUSH complex; at least composed of TASOR, PPHLN1 and MPHOSPH8. Interacts with MORC2; the interaction associateS MORC2 with the HUSH complex which recruits MORC2 to heterochromatic loci. Interacts with ZNF638; leading to recruitment of the HUSH complex to unintegrated retroviral DNA. Interacts with INPP5A, EML1, SV1L, GPSM2, ITGB3BP, CNTN1, ETFA, PSMD8, S100A10, MPHOSPH8, TMEM100, ALB, PARPBP, HCFC2, NCBP1 and SETDB1.

The protein resides in the nucleus. It localises to the chromosome. Functionally, component of the HUSH complex, a multiprotein complex that mediates epigenetic repression. The HUSH complex is recruited to genomic loci rich in H3K9me3 and is required to maintain transcriptional silencing by promoting recruitment of SETDB1, a histone methyltransferase that mediates further deposition of H3K9me3, as well as MORC2. Also represses L1 retrotransposons in collaboration with MORC2 and, probably, SETDB1, the silencing is dependent of repressive epigenetic modifications, such as H3K9me3 mark. Silencing events often occur within introns of transcriptionally active genes, and lead to the down-regulation of host gene expression. The HUSH complex is also involved in the silencing of unintegrated retroviral DNA by being recruited by ZNF638: some part of the retroviral DNA formed immediately after infection remains unintegrated in the host genome and is transcriptionally repressed. Plays a crucial role in early embryonic development. Involved in the organization of spindle poles and spindle apparatus assembly during zygotic division. Plays an important role in maintaining epiblast fitness or potency. In Homo sapiens (Human), this protein is Protein TASOR.